Reading from the N-terminus, the 29-residue chain is GLPVCGETCVGGTCNTPGCSCSWPVCTRN.

The segment at residues 1–29 is a cross-link (cyclopeptide (Gly-Asn)); the sequence is GLPVCGETCVGGTCNTPGCSCSWPVCTRN. Cystine bridges form between Cys-5–Cys-19, Cys-9–Cys-21, and Cys-14–Cys-26.

In terms of processing, this is a cyclic peptide.

Probably participates in a plant defense mechanism. Has cytotoxic activity against a variety of drug-resistant and drug-sensitive human tumor cell lines, and against primary chronic lymphocytic leukemia cells. Has weak cytotoxic activity against primary ovarian carcinoma cells or normal lymphocytes. The chain is Varv peptide A from Viola arvensis (European field pansy).